The sequence spans 446 residues: ATP-dependent protease ATPase subunit HslU (446 aa).

ATP is bound by residues V17, 59-64 (GVGKTE), D255, E320, and R392.

This sequence belongs to the ClpX chaperone family. HslU subfamily. In terms of assembly, a double ring-shaped homohexamer of HslV is capped on each side by a ring-shaped HslU homohexamer. The assembly of the HslU/HslV complex is dependent on binding of ATP.

It localises to the cytoplasm. Its function is as follows. ATPase subunit of a proteasome-like degradation complex; this subunit has chaperone activity. The binding of ATP and its subsequent hydrolysis by HslU are essential for unfolding of protein substrates subsequently hydrolyzed by HslV. HslU recognizes the N-terminal part of its protein substrates and unfolds these before they are guided to HslV for hydrolysis. The sequence is that of ATP-dependent protease ATPase subunit HslU from Azotobacter vinelandii (strain DJ / ATCC BAA-1303).